A 724-amino-acid chain; its full sequence is Protein arginine N-methyltransferase 1.6 (724 aa).

2 SAM-dependent MTase PRMT-type domains span residues 61–388 (NDQP…YNLK) and 395–721 (HERT…IVTH). Active-site residues include Glu183 and Glu192.

The protein belongs to the class I-like SAM-binding methyltransferase superfamily. Protein arginine N-methyltransferase family. PRMT7 subfamily.

Arginine methyltransferase that can both catalyze the formation of omega-N monomethylarginine (MMA) and symmetrical dimethylarginine (sDMA). This is Protein arginine N-methyltransferase 1.6 (PRMT16) from Arabidopsis thaliana (Mouse-ear cress).